The following is an 83-amino-acid chain: Toxin AahP985 (83 aa).

The N-terminal stretch at 1 to 18 (MNYLVMISLALLIAGVDS) is a signal peptide. An LCN-type CS-alpha/beta domain is found at 20–82 (RDAYIAKNDN…VPIKLSGECH (63 aa)). Disulfide bonds link C30/C81, C34/C54, C40/C64, and C44/C66.

Belongs to the long (4 C-C) scorpion toxin superfamily. Sodium channel inhibitor family. Alpha subfamily. As to expression, expressed by the venom gland.

Its subcellular location is the secreted. Binds voltage-independently at site-3 of sodium channels (Nav) and inhibits the inactivation of the activated channels, thereby blocking neuronal transmission. The protein is Toxin AahP985 of Androctonus australis (Sahara scorpion).